The following is a 368-amino-acid chain: tRNA-specific 2-thiouridylase MnmA (368 aa).

ATP is bound by residues 11–18 and Met-37; that span reads GMSGGVDS. The tract at residues 97-99 is interaction with target base in tRNA; the sequence is NPD. Catalysis depends on Cys-102, which acts as the Nucleophile. The cysteines at positions 102 and 199 are disulfide-linked. Gly-127 is an ATP binding site. The interaction with tRNA stretch occupies residues 149-151; sequence KDQ. The active-site Cysteine persulfide intermediate is Cys-199. The interaction with tRNA stretch occupies residues 311–312; that stretch reads RY.

The protein belongs to the MnmA/TRMU family. As to quaternary structure, interacts with TusE.

The protein resides in the cytoplasm. It catalyses the reaction S-sulfanyl-L-cysteinyl-[protein] + uridine(34) in tRNA + AH2 + ATP = 2-thiouridine(34) in tRNA + L-cysteinyl-[protein] + A + AMP + diphosphate + H(+). Catalyzes the 2-thiolation of uridine at the wobble position (U34) of tRNA(Lys), tRNA(Glu) and tRNA(Gln), leading to the formation of s(2)U34, the first step of tRNA-mnm(5)s(2)U34 synthesis. Sulfur is provided by IscS, via a sulfur-relay system. Binds ATP and its substrate tRNAs. This is tRNA-specific 2-thiouridylase MnmA from Escherichia coli O139:H28 (strain E24377A / ETEC).